Here is a 598-residue protein sequence, read N- to C-terminus: UvrABC system protein C (598 aa).

The region spanning 14-91 is the GIY-YIG domain; it reads DSPGCYLHKD…IQKNMPKYNI (78 aa). The 36-residue stretch at 196-231 folds into the UVR domain; that stretch reads DKIIEDLRSKMLAASEEMAFERAAEYRDLISGIATM.

This sequence belongs to the UvrC family. Interacts with UvrB in an incision complex.

It is found in the cytoplasm. Functionally, the UvrABC repair system catalyzes the recognition and processing of DNA lesions. UvrC both incises the 5' and 3' sides of the lesion. The N-terminal half is responsible for the 3' incision and the C-terminal half is responsible for the 5' incision. In Streptococcus pyogenes serotype M3 (strain ATCC BAA-595 / MGAS315), this protein is UvrABC system protein C.